The chain runs to 373 residues: Chemerin-like receptor 1 (373 aa).

Over 1–41 (MRMEDEDYNTSISYGDEYPDYLDSIVVLEDLSPLEARVTRI) the chain is Extracellular. N9 carries an N-linked (GlcNAc...) asparagine glycan. Residues 42–64 (FLVVVYSIVCFLGILGNGLVIII) form a helical membrane-spanning segment. The Cytoplasmic portion of the chain corresponds to 65 to 75 (ATFKMKKTVNM). The chain crosses the membrane as a helical span at residues 76 to 97 (VWFLNLAVADFLFNVFLPIHIT). The Extracellular portion of the chain corresponds to 98-114 (YAAMDYHWVFGTAMCKI). Residues C112 and C189 are joined by a disulfide bond. A helical membrane pass occupies residues 115 to 135 (SNFLLIHNMFTSVFLLTIISS). At 136–154 (DRCISVLLPVWSQNHRSVR) the chain is on the cytoplasmic side. The chain crosses the membrane as a helical span at residues 155 to 176 (LAYMACMVIWVLAFFLSSPSLV). Over 177–224 (FRDTANLHGKISCFNNFSLSTPGSSSWPTHSQMDPVGYSRHMVVTVTR) the chain is Extracellular. N-linked (GlcNAc...) asparagine glycosylation occurs at N192. The helical transmembrane segment at 225 to 245 (FLCGFLVPVLIITACYLTIVC) threads the bilayer. At 246–261 (KLQRNRLAKTKKPFKI) the chain is on the cytoplasmic side. A helical transmembrane segment spans residues 262–282 (IVTIIITFFLCWCPYHTLNLL). Over 283–300 (ELHHTAMPGSVFSLGLPL) the chain is Extracellular. Residues 301–320 (ATALAIANSCMNPILYVFMG) traverse the membrane as a helical segment. At 321–373 (QDFKKFKVALFSRLVNALSEDTGHSSYPSHRSFTKMSSMNERTSMNERETGML) the chain is on the cytoplasmic side. A Phosphoserine modification is found at S339. Residues 341–373 (DTGHSSYPSHRSFTKMSSMNERTSMNERETGML) are disordered. T342 bears the Phosphothreonine mark. Residues 344–363 (HSSYPSHRSFTKMSSMNERT) are compositionally biased toward polar residues. Phosphoserine occurs at positions 349, 352, and 358. Positions 364-373 (SMNERETGML) are enriched in basic and acidic residues.

The protein belongs to the chemokine-like receptor (CMKLR) family. Prominently expressed in developing osseous and cartilaginous tissue. Also found in adult parathyroid glands. Expressed in cardiovascular system, brain, kidney, gastrointestinal tissues and myeloid tissues. Expressed in a broad array of tissues associated with hematopoietic and immune function including, spleen, thymus, appendix, lymph node, bone marrow and fetal liver. Among leukocyte populations abundant expression in monocyte-derived macrophage and immature dendritic cells (DCs). High expression in blood monocytes and low levels in polymorphonuclear cells and T-cells. Expressed on endothelial cells. Highly expressed in differentiating adipocytes.

The protein localises to the cell membrane. In terms of biological role, receptor for the chemoattractant adipokine chemerin/RARRES2 and for the omega-3 fatty acid derived molecule resolvin E1. Interaction with RARRES2 initiates activation of G proteins G(i)/G(o) and beta-arrestin pathways inducing cellular responses via second messenger pathways such as intracellular calcium mobilization, phosphorylation of MAP kinases MAPK1/MAPK3 (ERK1/2), TYRO3, MAPK14/P38MAPK and PI3K leading to multifunctional effects, like reduction of immune responses, enhancing of adipogenesis and angionesis. Resolvin E1 down-regulates cytokine production in macrophages by reducing the activation of MAPK1/3 (ERK1/2) and NF-kappa-B. Positively regulates adipogenesis and adipocyte metabolism. Functionally, (Microbial infection) Acts as a coreceptor for several SIV strains (SIVMAC316, SIVMAC239, SIVMACL7E-FR and SIVSM62A), as well as a primary HIV-1 strain (92UG024-2). This is Chemerin-like receptor 1 from Homo sapiens (Human).